The primary structure comprises 176 residues: Sec-independent protein translocase protein TatB (176 aa).

A helical membrane pass occupies residues methionine 1–glycine 21. The interval glutamine 155–leucine 176 is disordered.

This sequence belongs to the TatB family. As to quaternary structure, the Tat system comprises two distinct complexes: a TatABC complex, containing multiple copies of TatA, TatB and TatC subunits, and a separate TatA complex, containing only TatA subunits. Substrates initially bind to the TatABC complex, which probably triggers association of the separate TatA complex to form the active translocon.

It is found in the cell inner membrane. Part of the twin-arginine translocation (Tat) system that transports large folded proteins containing a characteristic twin-arginine motif in their signal peptide across membranes. Together with TatC, TatB is part of a receptor directly interacting with Tat signal peptides. TatB may form an oligomeric binding site that transiently accommodates folded Tat precursor proteins before their translocation. This is Sec-independent protein translocase protein TatB from Burkholderia ambifaria (strain ATCC BAA-244 / DSM 16087 / CCUG 44356 / LMG 19182 / AMMD) (Burkholderia cepacia (strain AMMD)).